The sequence spans 80 residues: MAKFASIIVLLFVALVVFAAFEEPTMVEAQKLCQRPSGTWSGVCGNNNACKNQCIRLEKARHGSCNYVFPAHKCICYFPC.

An N-terminal signal peptide occupies residues 1–29 (MAKFASIIVLLFVALVVFAAFEEPTMVEA). Gln30 bears the Pyrrolidone carboxylic acid mark. 4 cysteine pairs are disulfide-bonded: Cys33/Cys80, Cys44/Cys65, Cys50/Cys74, and Cys54/Cys76.

This sequence belongs to the DEFL family.

It is found in the secreted. Possesses antifungal activity sensitive to inorganic cations. Induces potential changes in fungal membranes and increased K(+) efflux and Ca(2+) uptake. This chain is Defensin-like protein 2 (AFP2), found in Raphanus sativus (Radish).